Here is a 388-residue protein sequence, read N- to C-terminus: Ferrochelatase (388 aa).

Fe cation is bound by residues H197 and E278.

The protein belongs to the ferrochelatase family.

Its subcellular location is the cytoplasm. The catalysed reaction is heme b + 2 H(+) = protoporphyrin IX + Fe(2+). It functions in the pathway porphyrin-containing compound metabolism; protoheme biosynthesis; protoheme from protoporphyrin-IX: step 1/1. Catalyzes the ferrous insertion into protoporphyrin IX. This is Ferrochelatase from Thermosynechococcus vestitus (strain NIES-2133 / IAM M-273 / BP-1).